A 263-amino-acid polypeptide reads, in one-letter code: MLALRLLNVVAPAYFLCISLVTFVLQLFLFLPSMREDPTATPLFSPAVLHGALFLFLSANALGNYVLVIQNSPDDLGTCQGTMSQRPQCPPPSTHFCRVCSRVTLRHDHHCFFTGNCIGSRNMRNFILFCLYTSLACLYSMVAGVAYISAVLSISFAHPLAFLTLLPTSISQFFSGAVLGSDMFVILMLYLWFAVGLACAGFCCHQLLLILRGQTRYQVRKGMAVRARPWRKNLQEVFGKRWLLGLLVPMFNVGTESSKQQDK.

At 1–9 (MLALRLLNV) the chain is on the cytoplasmic side. A helical transmembrane segment spans residues 10-30 (VAPAYFLCISLVTFVLQLFLF). Over 31–48 (LPSMREDPTATPLFSPAV) the chain is Lumenal. A helical membrane pass occupies residues 49–69 (LHGALFLFLSANALGNYVLVI). The Cytoplasmic segment spans residues 70 to 125 (QNSPDDLGTCQGTMSQRPQCPPPSTHFCRVCSRVTLRHDHHCFFTGNCIGSRNMRN). Residues 91–131 (PPSTHFCRVCSRVTLRHDHHCFFTGNCIGSRNMRNFILFCL) enclose the DHHC domain. The active-site S-palmitoyl cysteine intermediate is the C111. The next 2 helical transmembrane spans lie at 126 to 146 (FILF…AGVA) and 147 to 167 (YISA…TLLP). Over 168-182 (TSISQFFSGAVLGSD) the chain is Cytoplasmic. The chain crosses the membrane as a helical span at residues 183–203 (MFVILMLYLWFAVGLACAGFC). Over 204 to 263 (CHQLLLILRGQTRYQVRKGMAVRARPWRKNLQEVFGKRWLLGLLVPMFNVGTESSKQQDK) the chain is Lumenal.

This sequence belongs to the DHHC palmitoyltransferase family. Interacts with CNN3.

Its subcellular location is the endoplasmic reticulum membrane. It localises to the golgi apparatus membrane. It carries out the reaction L-cysteinyl-[protein] + hexadecanoyl-CoA = S-hexadecanoyl-L-cysteinyl-[protein] + CoA. Palmitoyltransferase that could catalyze the addition of palmitate onto various protein substrates and be involved in a variety of cellular processes. Catalyzes the palmitoylation of KCNMA1, regulating localization of KCNMA1 to the plasma membrane. Might also mediate palmitoylation of CNN3. The sequence is that of Palmitoyltransferase ZDHHC22 from Mus musculus (Mouse).